The following is a 284-amino-acid chain: Probable plastid-lipid-associated protein 10, chloroplastic (284 aa).

The transit peptide at 1–40 (MDRIASATFSCPAISLSRVCRISPFGLNIKTNHRKRFSCR) directs the protein to the chloroplast.

This sequence belongs to the PAP/fibrillin family.

It localises to the plastid. It is found in the chloroplast. Its subcellular location is the plastoglobule. The sequence is that of Probable plastid-lipid-associated protein 10, chloroplastic (PAP10) from Arabidopsis thaliana (Mouse-ear cress).